The chain runs to 488 residues: Coagulation factor X (488 aa).

The N-terminal stretch at 1–31 (MGRPLHLVLLSASLAGLLLLGESLFIRREQA) is a signal peptide. Positions 32-40 (NNILARVTR) are excised as a propeptide. The Gla domain maps to 41 to 85 (ANSFLEEMKKGHLERECMEETCSYEEAREVFEDSDKTNEFWNKYK). A 4-carboxyglutamate mark is found at Glu-46, Glu-47, Glu-54, Glu-56, Glu-59, Glu-60, Glu-65, Glu-66, Glu-69, Glu-72, and Glu-79. The cysteines at positions 57 and 62 are disulfide-linked. Residues 86 to 122 (DGDQCETSPCQNQGKCKDGLGEYTCTCLEGFEGKNCE) enclose the EGF-like 1; calcium-binding domain. Cystine bridges form between Cys-90/Cys-101, Cys-95/Cys-110, Cys-112/Cys-121, Cys-129/Cys-140, Cys-136/Cys-149, Cys-151/Cys-164, Cys-172/Cys-342, Cys-241/Cys-246, Cys-261/Cys-277, Cys-390/Cys-404, and Cys-415/Cys-443. Asp-103 carries the post-translational modification (3R)-3-hydroxyaspartate. The EGF-like 2 domain maps to 125-165 (TRKLCSLDNGDCDQFCHEEQNSVVCSCARGYTLADNGKACI). Positions 183–203 (SVAQATSSSGEAPDSITWKPY) are O-glycosylated at one site. The propeptide at 183 to 234 (SVAQATSSSGEAPDSITWKPYDAADLDPTENPFDLLDFNQTQPERGDNNLTR) is activation peptide. Thr-199 and Thr-211 each carry an O-linked (GalNAc...) threonine glycan. N-linked (GlcNAc...) asparagine glycans are attached at residues Asn-221 and Asn-231. The Peptidase S1 domain occupies 235–467 (IVGGQECKDG…FLKWIDRSMK (233 aa)). Active-site charge relay system residues include His-276 and Asp-322. Ser-419 acts as the Charge relay system in catalysis. An O-glycosylated at one site region spans residues 476 to 485 (SHAPEVITSS).

Belongs to the peptidase S1 family. In terms of assembly, the two chains are formed from a single-chain precursor by the excision of two Arg residues and are held together by 1 or more disulfide bonds. Forms a heterodimer with SERPINA5. Interacts (inactive and activated) with ixolaris, an anticoagulant protein from Ixodes scapularis saliva. Interacts (activated) with iripin-8, a serine protease inhibitor from Ixodes ricinus saliva. Interacts (activated) with FXa-directed anticoagulant from Aedes albopictus saliva. Interacts (activated) with guianensin, an anticoagulant protein from Simulium guianense saliva. Interacts (activated) with simukunin, an anticoagulant protein from Simulium vittatum saliva. Post-translationally, the vitamin K-dependent, enzymatic carboxylation of some glutamate residues allows the modified protein to bind calcium. In terms of processing, N- and O-glycosylated. O-glycosylated with core 1 or possibly core 8 glycans. Proteolytically cleaved and activated by cathepsin CTSG. The activation peptide is cleaved by factor IXa (in the intrinsic pathway), or by factor VIIa (in the extrinsic pathway). Post-translationally, the iron and 2-oxoglutarate dependent 3-hydroxylation of aspartate and asparagine is (R) stereospecific within EGF domains. In terms of tissue distribution, plasma; synthesized in the liver.

It localises to the secreted. The enzyme catalyses Selective cleavage of Arg-|-Thr and then Arg-|-Ile bonds in prothrombin to form thrombin.. With respect to regulation, inhibited by SERPINA5 and SERPINA10. Its function is as follows. Factor Xa is a vitamin K-dependent glycoprotein that converts prothrombin to thrombin in the presence of factor Va, calcium and phospholipid during blood clotting. Factor Xa activates pro-inflammatory signaling pathways in a protease-activated receptor (PAR)-dependent manner. Up-regulates expression of protease-activated receptors (PARs) F2R, F2RL1 and F2RL2 in dermal microvascular endothelial cells. Triggers the production of pro-inflammatory cytokines, such as MCP-1/CCL2 and IL6, in cardiac fibroblasts and umbilical vein endothelial cells in PAR-1/F2R-dependent manner. Triggers the production of pro-inflammatory cytokines, such as MCP-1/CCL2, IL6, TNF-alpha/TNF, IL-1beta/IL1B, IL8/CXCL8 and IL18, in endothelial cells and atrial tissues. Induces expression of adhesion molecules, such as ICAM1, VCAM1 and SELE, in endothelial cells and atrial tissues. Increases expression of phosphorylated ERK1/2 in dermal microvascular endothelial cells and atrial tissues. Triggers activation of the transcription factor NF-kappa-B in dermal microvascular endothelial cells and atrial tissues. Activates pro-inflammatory and pro-fibrotic responses in dermal fibroblasts and enhances wound healing probably via PAR-2/F2RL1-dependent mechanism. Activates barrier protective signaling responses in endothelial cells in PAR-2/F2RL1-dependent manner; the activity depends on the cleavage of PAR-2/F2RL1 by factor Xa. Up-regulates expression of plasminogen activator inhibitor 1 (SERPINE1) in atrial tissues. This is Coagulation factor X (F10) from Homo sapiens (Human).